A 172-amino-acid chain; its full sequence is ATP synthase subunit b (172 aa).

Residues 27-47 (LAIVIFGLYKFLPPFIGGILE) form a helical membrane-spanning segment.

It belongs to the ATPase B chain family. F-type ATPases have 2 components, F(1) - the catalytic core - and F(0) - the membrane proton channel. F(1) has five subunits: alpha(3), beta(3), gamma(1), delta(1), epsilon(1). F(0) has four main subunits: a(1), b(1), b'(1) and c(10-14). The alpha and beta chains form an alternating ring which encloses part of the gamma chain. F(1) is attached to F(0) by a central stalk formed by the gamma and epsilon chains, while a peripheral stalk is formed by the delta, b and b' chains.

The protein localises to the cellular thylakoid membrane. In terms of biological role, f(1)F(0) ATP synthase produces ATP from ADP in the presence of a proton or sodium gradient. F-type ATPases consist of two structural domains, F(1) containing the extramembraneous catalytic core and F(0) containing the membrane proton channel, linked together by a central stalk and a peripheral stalk. During catalysis, ATP synthesis in the catalytic domain of F(1) is coupled via a rotary mechanism of the central stalk subunits to proton translocation. Its function is as follows. Component of the F(0) channel, it forms part of the peripheral stalk, linking F(1) to F(0). This Prochlorococcus marinus (strain MIT 9313) protein is ATP synthase subunit b.